Reading from the N-terminus, the 448-residue chain is Glutamate--tRNA ligase 1 (448 aa).

The short motif at 9–19 (PSPTGKLHIGN) is the 'HIGH' region element. The 'KMSKS' region motif lies at 240–244 (KISKR). Position 243 (Lys243) interacts with ATP.

The protein belongs to the class-I aminoacyl-tRNA synthetase family. Glutamate--tRNA ligase type 1 subfamily. In terms of assembly, monomer.

The protein resides in the cytoplasm. The catalysed reaction is tRNA(Glu) + L-glutamate + ATP = L-glutamyl-tRNA(Glu) + AMP + diphosphate. Its function is as follows. Catalyzes the attachment of glutamate to tRNA(Glu) in a two-step reaction: glutamate is first activated by ATP to form Glu-AMP and then transferred to the acceptor end of tRNA(Glu). The polypeptide is Glutamate--tRNA ligase 1 (Orientia tsutsugamushi (strain Ikeda) (Rickettsia tsutsugamushi)).